A 432-amino-acid chain; its full sequence is Ribulose bisphosphate carboxylase-like protein 2 (432 aa).

Lysine 198, aspartate 200, and glutamate 201 together coordinate Mg(2+). At lysine 198 the chain carries N6-carboxylysine.

This sequence belongs to the RuBisCO large chain family. Type IV subfamily. As to quaternary structure, homodimer. The cofactor is Mg(2+).

In terms of biological role, may be involved in sulfur metabolism and oxidative stress response. Does not show RuBisCO activity. The protein is Ribulose bisphosphate carboxylase-like protein 2 (rlp2) of Rhodopseudomonas palustris (strain ATCC BAA-98 / CGA009).